Reading from the N-terminus, the 547-residue chain is 2-succinyl-5-enolpyruvyl-6-hydroxy-3-cyclohexene-1-carboxylate synthase (547 aa).

It belongs to the TPP enzyme family. MenD subfamily. In terms of assembly, homodimer. The cofactor is Mg(2+). Mn(2+) serves as cofactor. Thiamine diphosphate is required as a cofactor.

The enzyme catalyses isochorismate + 2-oxoglutarate + H(+) = 5-enolpyruvoyl-6-hydroxy-2-succinyl-cyclohex-3-ene-1-carboxylate + CO2. The protein operates within quinol/quinone metabolism; 1,4-dihydroxy-2-naphthoate biosynthesis; 1,4-dihydroxy-2-naphthoate from chorismate: step 2/7. It participates in quinol/quinone metabolism; menaquinone biosynthesis. Catalyzes the thiamine diphosphate-dependent decarboxylation of 2-oxoglutarate and the subsequent addition of the resulting succinic semialdehyde-thiamine pyrophosphate anion to isochorismate to yield 2-succinyl-5-enolpyruvyl-6-hydroxy-3-cyclohexene-1-carboxylate (SEPHCHC). The polypeptide is 2-succinyl-5-enolpyruvyl-6-hydroxy-3-cyclohexene-1-carboxylate synthase (Mycobacterium sp. (strain KMS)).